A 473-amino-acid polypeptide reads, in one-letter code: MGQSGRSRHQKRARAQAQLRNLEAYAANPHSFVFTRGCTGRNIRQLSLDVRRVMEPLTASRLQVRKKNSLKDCVAVAGPLGVTHFLILSKTETNIYFKLMHLPGGPTLTFQVKKYSLVRDVVSSLRRHRMHEQQFAYPPLLVLNSFGPHGMHVKLMATMFQNLFPSINVHKVNLNTIKRCLLIDYNHDSQELDFRHYSIKVVPVGASRGMKKLLQEKFPNMSRLQDISELLATGAGLSESEAEPDGDHNITELPQAVAGRGNMRAQQSAVRLTEIGPRMTLQLIKVQEGVGEGKVMFHSFVRKTEEELQAILEAKEKKLRLKAQRQAQQAQNVQRKQEQREAHRKKSLEGMKKARVRGGDEEASGIPSRTASLGLGEDDDEQEDDDIEYFCQAVGEAPSEDLFPEAKRKRLAKSPGQKRKRREMDRGRGRLCDQKFPKPKDKSHGAQARRGPRGASQDGGRGQGRGRPRKRVA.

The 264-residue stretch at P29–E292 folds into the Brix domain. Phosphoserine is present on residues S238 and S240. A disordered region spans residues A323–A473. The span at Q324–Q334 shows a compositional bias: low complexity. A compositionally biased stretch (basic and acidic residues) spans R335–D360. Over residues G376 to E388 the composition is skewed to acidic residues. Positions K407–R421 are enriched in basic residues. Basic and acidic residues predominate over residues R422–H444. The residue at position 438 (K438) is an N6-acetyllysine. Residues G464 to A473 are compositionally biased toward basic residues.

It localises to the nucleus. Its subcellular location is the nucleolus. May have a role in cell growth. The polypeptide is Suppressor of SWI4 1 homolog (PPAN) (Pongo abelii (Sumatran orangutan)).